The chain runs to 171 residues: Large ribosomal subunit protein uL10 (171 aa).

Belongs to the universal ribosomal protein uL10 family. Part of the ribosomal stalk of the 50S ribosomal subunit. The N-terminus interacts with L11 and the large rRNA to form the base of the stalk. The C-terminus forms an elongated spine to which L12 dimers bind in a sequential fashion forming a multimeric L10(L12)X complex.

Forms part of the ribosomal stalk, playing a central role in the interaction of the ribosome with GTP-bound translation factors. The chain is Large ribosomal subunit protein uL10 from Sphingopyxis alaskensis (strain DSM 13593 / LMG 18877 / RB2256) (Sphingomonas alaskensis).